A 105-amino-acid polypeptide reads, in one-letter code: uncharacterized protein (105 aa).

Residues 1-27 are disordered; the sequence is MQSPAMKRIKSSSHSRWDGSGSVNEMP.

The protein resides in the mitochondrion. This is an uncharacterized protein from Arabidopsis thaliana (Mouse-ear cress).